Reading from the N-terminus, the 312-residue chain is Zinc finger protein 414 (312 aa).

The disordered stretch occupies residues 1–110 (MEEKPSGPIP…RRPPPGKQIP (110 aa)). Residues 29–48 (SPAVPAAAPSSSMSEEPGPE) show a composition bias toward low complexity. A compositionally biased stretch (polar residues) spans 84 to 93 (GLTSIVSGTS). C2H2-type zinc fingers lie at residues 109–133 (IPCS…LRTH), 145–169 (FRCS…SKLH), and 176–201 (FKCE…CAEH). The tract at residues 203–312 (QSPAPPPPPA…GSDAPSGACR (110 aa)) is disordered. A compositionally biased stretch (basic and acidic residues) spans 213–225 (LDREPPAPERPPE). Low complexity-rich tracts occupy residues 227–243 (DPAS…EPFT) and 265–285 (SPPR…SSAA).

It belongs to the krueppel C2H2-type zinc-finger protein family.

It localises to the nucleus. May be involved in transcriptional regulation. The sequence is that of Zinc finger protein 414 (ZNF414) from Homo sapiens (Human).